The sequence spans 338 residues: Anthranilate phosphoribosyltransferase (338 aa).

Residues glycine 80, 83 to 84 (GD), threonine 88, 90 to 93 (NIST), 108 to 116 (KHGNRAMSS), and serine 120 each bind 5-phospho-alpha-D-ribose 1-diphosphate. Residue glycine 80 participates in anthranilate binding. Residue serine 92 participates in Mg(2+) binding. Asparagine 111 is a binding site for anthranilate. Residue arginine 166 coordinates anthranilate. Positions 225 and 226 each coordinate Mg(2+).

It belongs to the anthranilate phosphoribosyltransferase family. Homodimer. Requires Mg(2+) as cofactor.

The enzyme catalyses N-(5-phospho-beta-D-ribosyl)anthranilate + diphosphate = 5-phospho-alpha-D-ribose 1-diphosphate + anthranilate. The protein operates within amino-acid biosynthesis; L-tryptophan biosynthesis; L-tryptophan from chorismate: step 2/5. Catalyzes the transfer of the phosphoribosyl group of 5-phosphorylribose-1-pyrophosphate (PRPP) to anthranilate to yield N-(5'-phosphoribosyl)-anthranilate (PRA). The chain is Anthranilate phosphoribosyltransferase from Herpetosiphon aurantiacus (strain ATCC 23779 / DSM 785 / 114-95).